The primary structure comprises 872 residues: Lysosomal cholesterol signaling protein (872 aa).

At 1–40 (MNSFSNLPAENLTIAVNMTKTLPTAVMHGFNSTNDPPSMS) the chain is on the lumenal side. The PIN-like transporter stretch occupies residues 3-372 (SFSNLPAENL…SAWLLTFPTM (370 aa)). N-linked (GlcNAc...) asparagine glycosylation is found at asparagine 11, asparagine 17, and asparagine 31. Residues 41–61 (ITRLFPALLECFGIVLCGYIA) form a helical membrane-spanning segment. Residues phenylalanine 45 and tyrosine 59 each coordinate cholesterol. Residues 62 to 81 (GRANVITSTQAKGLGNFVSR) are Cytoplasmic-facing. A helical membrane pass occupies residues 82–102 (FALPALLFKNMVVLNFSNVDW). Topologically, residues 103 to 106 (SFLY) are lumenal. Residues 107 to 127 (SILIAKASVFFIVCVLTLLVA) form a helical membrane-spanning segment. At 128–135 (SPDSRFSK) the chain is on the cytoplasmic side. Residues 136–156 (AGLFPIFATQSNDFALGYPIV) traverse the membrane as a discontinuously helical segment. Over 157-169 (EALYQTTYPEYLQ) the chain is Lumenal. The chain crosses the membrane as a helical span at residues 170–190 (YIYLVAPISLMMLNPIGFIFC). At 191–215 (EIQKWKDTQNASQNKIKIVGLGLLR) the chain is on the cytoplasmic side. The chain crosses the membrane as a discontinuously helical span at residues 216–236 (VLQNPIVFMVFIGIAFNFILD). At 237–245 (RKVPVYVEN) the chain is on the lumenal side. The discontinuously helical transmembrane segment at 246 to 266 (FLDGLGNSFSGSALFYLGLTM) threads the bilayer. The Cytoplasmic portion of the chain corresponds to 267–275 (VGKIKRLKK). Positions 268, 269, and 270 each coordinate cholesterol. The helical transmembrane segment at 276–296 (SAFVVLILLITAKLLVLPLLC) threads the bilayer. Residues 297 to 317 (REMVELLDKGDSVVNHTSLSN) lie on the Lumenal side of the membrane. The N-linked (GlcNAc...) asparagine glycan is linked to asparagine 311. The chain crosses the membrane as a discontinuously helical span at residues 318 to 338 (YAFLYGVFPVAPGVAIFATQF). Residues 339-348 (NMEVEIITSG) lie on the Cytoplasmic side of the membrane. A helical membrane pass occupies residues 349–369 (MVISTFVSAPIMYVSAWLLTF). The Lumenal portion of the chain corresponds to 370-383 (PTMDPKPLAYAIQN). The interval 382 to 719 (QNVSFDISIV…FGIFGLDKHL (338 aa)) is GPCR. Asparagine 383 is a glycosylation site (N-linked (GlcNAc...) asparagine). Residues 384 to 404 (VSFDISIVSLISLIWSQAILL) traverse the membrane as a helical segment. Topologically, residues 405–416 (LSKKYKQLPHML) are cytoplasmic. The chain crosses the membrane as a helical span at residues 417–437 (TTNLLIAQSIVCAGMMIWNFV). The Lumenal portion of the chain corresponds to 438–440 (KEK). Residues 441–461 (NFVGQILVFVLLYSSLYSTYL) form a helical membrane-spanning segment. The Cytoplasmic portion of the chain corresponds to 462–482 (WTGLLAISLFLLKKRERVQIP). The helical transmembrane segment at 483 to 503 (VGIIIISGWGIPALLVGVLLI) threads the bilayer. The Lumenal segment spans residues 504–522 (TGKHSGDSIDSAFFYGKEQ). A helical membrane pass occupies residues 523 to 543 (MITTAVTLFCSILIAGISLMC). The Cytoplasmic segment spans residues 544–662 (MNRTAQAGSY…GDQQLTRHVL (119 aa)). Arginine 659 provides a ligand contact to cholesterol. The helical transmembrane segment at 663-683 (LCLLLIIGLFANLSSCLWWLF) threads the bilayer. Residues 684–693 (NQEPGRLYVE) lie on the Lumenal side of the membrane. The helical transmembrane segment at 694 to 714 (LQFFCAVFNFGQGFISFGIFG) threads the bilayer. Residues 715–872 (LDKHLIILPF…SSPPSHSPKT (158 aa)) lie on the Cytoplasmic side of the membrane. The DEP domain maps to 759-837 (YHRDLCIRNI…DEYLFYRFLQ (79 aa)).

Homodimer; via the transporter region and DEP domain. Interacts with the GATOR1 complex; preventing interaction between GATOR1 and KICSTOR; interaction is disrupted upon cholesterol starvation.

The protein resides in the lysosome membrane. Functionally, cholesterol-binding protein that acts as a regulator of mTORC1 signaling pathway. Acts as a sensor of cholesterol to signal cholesterol sufficiency to mTORC1: in presence of cholesterol, binds cholesterol, leading to disruption of the interaction between the GATOR1 and KICSTOR complexes and promotion of mTORC1 signaling. Upon cholesterol starvation, GPR155/LYCHOS is unable to perturb the association between GATOR1 and KICSTOR, leading to mTORC1 signaling inhibition. Binds indole-3-acetic acid and may play a role in tryptophan metabolism. In Pongo abelii (Sumatran orangutan), this protein is Lysosomal cholesterol signaling protein (GPR155).